We begin with the raw amino-acid sequence, 154 residues long: Endoribonuclease YbeY (154 aa).

Zn(2+) contacts are provided by His-117, His-121, and His-127.

This sequence belongs to the endoribonuclease YbeY family. The cofactor is Zn(2+).

It localises to the cytoplasm. Its function is as follows. Single strand-specific metallo-endoribonuclease involved in late-stage 70S ribosome quality control and in maturation of the 3' terminus of the 16S rRNA. The sequence is that of Endoribonuclease YbeY from Polaromonas sp. (strain JS666 / ATCC BAA-500).